The following is a 281-amino-acid chain: 40S small subunit processome assembly factor 1 (281 aa).

Positions Leu-29–Thr-141 are disordered. Residues Ser-67 and Ser-75 each carry the phosphoserine modification. Lys-172 is subject to N6-acetyllysine. A disordered region spans residues Glu-221 to Gly-254. Ser-267 carries the post-translational modification Phosphoserine.

Part of the small subunit (SSU) processome, composed of more than 70 proteins and the RNA chaperone small nucleolar RNA (snoRNA) U3.

It is found in the chromosome. The protein resides in the nucleus. Its subcellular location is the nucleolus. In terms of biological role, part of the small subunit (SSU) processome, first precursor of the small eukaryotic ribosomal subunit. During the assembly of the SSU processome in the nucleolus, many ribosome biogenesis factors, an RNA chaperone and ribosomal proteins associate with the nascent pre-rRNA and work in concert to generate RNA folding, modifications, rearrangements and cleavage as well as targeted degradation of pre-ribosomal RNA by the RNA exosome. Prevents helicase DHX37 to be recruited before post-A1 state. This chain is 40S small subunit processome assembly factor 1, found in Mus musculus (Mouse).